The chain runs to 209 residues: Thiamine-phosphate synthase (209 aa).

Residues 37–41 (QLREK) and Asn-69 contribute to the 4-amino-2-methyl-5-(diphosphooxymethyl)pyrimidine site. Mg(2+)-binding residues include Asp-70 and Asp-89. 4-amino-2-methyl-5-(diphosphooxymethyl)pyrimidine is bound at residue Ser-108. 134-136 (TNT) contacts 2-[(2R,5Z)-2-carboxy-4-methylthiazol-5(2H)-ylidene]ethyl phosphate. Lys-137 serves as a coordination point for 4-amino-2-methyl-5-(diphosphooxymethyl)pyrimidine. 2-[(2R,5Z)-2-carboxy-4-methylthiazol-5(2H)-ylidene]ethyl phosphate is bound by residues Gly-164 and 184 to 185 (VS).

The protein belongs to the thiamine-phosphate synthase family. Requires Mg(2+) as cofactor.

It carries out the reaction 2-[(2R,5Z)-2-carboxy-4-methylthiazol-5(2H)-ylidene]ethyl phosphate + 4-amino-2-methyl-5-(diphosphooxymethyl)pyrimidine + 2 H(+) = thiamine phosphate + CO2 + diphosphate. It catalyses the reaction 2-(2-carboxy-4-methylthiazol-5-yl)ethyl phosphate + 4-amino-2-methyl-5-(diphosphooxymethyl)pyrimidine + 2 H(+) = thiamine phosphate + CO2 + diphosphate. The catalysed reaction is 4-methyl-5-(2-phosphooxyethyl)-thiazole + 4-amino-2-methyl-5-(diphosphooxymethyl)pyrimidine + H(+) = thiamine phosphate + diphosphate. It participates in cofactor biosynthesis; thiamine diphosphate biosynthesis; thiamine phosphate from 4-amino-2-methyl-5-diphosphomethylpyrimidine and 4-methyl-5-(2-phosphoethyl)-thiazole: step 1/1. Functionally, condenses 4-methyl-5-(beta-hydroxyethyl)thiazole monophosphate (THZ-P) and 2-methyl-4-amino-5-hydroxymethyl pyrimidine pyrophosphate (HMP-PP) to form thiamine monophosphate (TMP). In Methanobrevibacter smithii (strain ATCC 35061 / DSM 861 / OCM 144 / PS), this protein is Thiamine-phosphate synthase.